The sequence spans 271 residues: 3-methyl-2-oxobutanoate hydroxymethyltransferase (271 aa).

2 residues coordinate Mg(2+): Asp-53 and Asp-92. 3-methyl-2-oxobutanoate-binding positions include 53 to 54 (DS), Asp-92, and Lys-120. Position 122 (Glu-122) interacts with Mg(2+). Catalysis depends on Glu-189, which acts as the Proton acceptor.

This sequence belongs to the PanB family. In terms of assembly, homodecamer; pentamer of dimers. It depends on Mg(2+) as a cofactor.

It is found in the cytoplasm. The enzyme catalyses 3-methyl-2-oxobutanoate + (6R)-5,10-methylene-5,6,7,8-tetrahydrofolate + H2O = 2-dehydropantoate + (6S)-5,6,7,8-tetrahydrofolate. It functions in the pathway cofactor biosynthesis; (R)-pantothenate biosynthesis; (R)-pantoate from 3-methyl-2-oxobutanoate: step 1/2. Functionally, catalyzes the reversible reaction in which hydroxymethyl group from 5,10-methylenetetrahydrofolate is transferred onto alpha-ketoisovalerate to form ketopantoate. This chain is 3-methyl-2-oxobutanoate hydroxymethyltransferase, found in Burkholderia vietnamiensis (strain G4 / LMG 22486) (Burkholderia cepacia (strain R1808)).